Reading from the N-terminus, the 71-residue chain is Virion membrane protein A13 homolog (71 aa).

A helical transmembrane segment spans residues Met-1–Ile-21. The Virion surface segment spans residues Tyr-22–Ser-70.

The protein belongs to the chordopoxvirinae A13 family.

Its subcellular location is the virion membrane. Its function is as follows. Essential for the encapsidation of DNA into immature virions (IV) and the subsequent maturation of IV into mature virions (MV). The chain is Virion membrane protein A13 homolog from Vertebrata (FPV).